The sequence spans 74 residues: Peptide BmKa2 (74 aa).

The N-terminal stretch at 1 to 24 is a signal peptide; the sequence is MSSKTLLVLLLVGVLVSTFFTADA.

The protein belongs to the non-disulfide-bridged peptide (NDBP) superfamily. Long chain multifunctional peptide (group 2) family. In terms of tissue distribution, expressed by the venom gland.

The protein resides in the secreted. In terms of biological role, highly acidic peptide that may have antibacterial activity. The polypeptide is Peptide BmKa2 (Olivierus martensii (Manchurian scorpion)).